Consider the following 476-residue polypeptide: NADH-quinone oxidoreductase subunit N (476 aa).

14 consecutive transmembrane segments (helical) span residues 8–28 (ITTE…GLLV), 35–55 (GLGS…IINW), 71–91 (YATF…LGSF), 102–122 (FEYY…ASAG), 124–144 (FITL…LVAF), 159–179 (ILLA…VYGA), 201–221 (LIVG…AVPF), 239–259 (FLAV…FAGG), 267–287 (WTLL…LVAI), 295–315 (MLAY…VSAT), 322–342 (VMFY…VVAI), 366–386 (ASVM…AGFV), 405–425 (LGLI…LVMF), and 437–457 (VGGA…ILGI).

The protein belongs to the complex I subunit 2 family. As to quaternary structure, NDH-1 is composed of 14 different subunits. Subunits NuoA, H, J, K, L, M, N constitute the membrane sector of the complex.

The protein localises to the cell membrane. The catalysed reaction is a quinone + NADH + 5 H(+)(in) = a quinol + NAD(+) + 4 H(+)(out). Functionally, NDH-1 shuttles electrons from NADH, via FMN and iron-sulfur (Fe-S) centers, to quinones in the respiratory chain. The immediate electron acceptor for the enzyme in this species is believed to be a menaquinone. Couples the redox reaction to proton translocation (for every two electrons transferred, four hydrogen ions are translocated across the cytoplasmic membrane), and thus conserves the redox energy in a proton gradient. This is NADH-quinone oxidoreductase subunit N from Desulforamulus reducens (strain ATCC BAA-1160 / DSM 100696 / MI-1) (Desulfotomaculum reducens).